Consider the following 230-residue polypeptide: Orotate phosphoribosyltransferase (230 aa).

Residues R107, K108, K111, H113, and 133-141 (EDLTTAGGS) each bind 5-phospho-alpha-D-ribose 1-diphosphate. Residue T137 coordinates orotate.

Belongs to the purine/pyrimidine phosphoribosyltransferase family. PyrE subfamily. As to quaternary structure, homodimer. Requires Mg(2+) as cofactor.

It catalyses the reaction orotidine 5'-phosphate + diphosphate = orotate + 5-phospho-alpha-D-ribose 1-diphosphate. The protein operates within pyrimidine metabolism; UMP biosynthesis via de novo pathway; UMP from orotate: step 1/2. In terms of biological role, catalyzes the transfer of a ribosyl phosphate group from 5-phosphoribose 1-diphosphate to orotate, leading to the formation of orotidine monophosphate (OMP). The protein is Orotate phosphoribosyltransferase of Allorhizobium ampelinum (strain ATCC BAA-846 / DSM 112012 / S4) (Agrobacterium vitis (strain S4)).